Here is a 406-residue protein sequence, read N- to C-terminus: DNA primase DnaG (406 aa).

Residues 169 to 247 enclose the Toprim domain; it reads PNLIIVEGRA…KIDFVARAPI (79 aa). Mg(2+) contacts are provided by E175, D220, and D222.

Belongs to the archaeal DnaG primase family. Forms a ternary complex with MCM helicase and DNA. Component of the archaeal exosome complex. Interacts with Csl4 but not with Rrp4. Mg(2+) serves as cofactor.

It catalyses the reaction ssDNA + n NTP = ssDNA/pppN(pN)n-1 hybrid + (n-1) diphosphate.. RNA polymerase that catalyzes the synthesis of short RNA molecules used as primers for DNA polymerase during DNA replication. Can use NTPs but not dNTPs. Binds DNA. Also part of the exosome, which is a complex involved in RNA degradation. Acts as a poly(A)-binding protein that enhances the interaction between heteromeric, adenine-rich transcripts and the exosome. The sequence is that of DNA primase DnaG from Saccharolobus solfataricus (strain ATCC 35092 / DSM 1617 / JCM 11322 / P2) (Sulfolobus solfataricus).